Consider the following 297-residue polypeptide: Probable endonuclease 4 (297 aa).

Residues His-69, His-110, Glu-145, Asp-179, His-182, His-214, Asp-227, His-229, and Glu-259 each coordinate Zn(2+).

The protein belongs to the AP endonuclease 2 family. It depends on Zn(2+) as a cofactor.

The enzyme catalyses Endonucleolytic cleavage to 5'-phosphooligonucleotide end-products.. In terms of biological role, endonuclease IV plays a role in DNA repair. It cleaves phosphodiester bonds at apurinic or apyrimidinic (AP) sites, generating a 3'-hydroxyl group and a 5'-terminal sugar phosphate. This chain is Probable endonuclease 4, found in Listeria monocytogenes serotype 4b (strain CLIP80459).